The primary structure comprises 326 residues: Protein-arginine N-acetylglucosaminyltransferase NleB2 (326 aa).

Residues 45–47 (QWF), Tyr-69, and 216–219 (YLDM) each bind UDP-N-acetyl-alpha-D-glucosamine. The short motif at 218–220 (DMD) is the DXD motif element. Asp-220 contacts Mn(2+). Glu-250 serves as the catalytic Proton acceptor. 2 residues coordinate Mn(2+): Asn-317 and Ser-319. UDP-N-acetyl-alpha-D-glucosamine contacts are provided by residues Ser-319 and 324 to 326 (SSW).

This sequence belongs to the glycosyltransferase NleB family. Mn(2+) serves as cofactor.

The protein resides in the secreted. Its subcellular location is the host cell. The catalysed reaction is L-arginyl-[protein] + UDP-N-acetyl-alpha-D-glucosamine = N(omega)-(N-acetyl-beta-D-glucosaminyl)-L-arginyl-[protein] + UDP + H(+). Protein-arginine N-acetylglucosaminyltransferase effector that catalyzes the transfer of a single N-acetylglucosamine (GlcNAc) to a conserved arginine residue of host target proteins. In contrast to NleB1, not able to disrupt TNF signaling in infected cells. Shows a lower enzymatic activity than NleB1. The protein is Protein-arginine N-acetylglucosaminyltransferase NleB2 of Escherichia coli O127:H6 (strain E2348/69 / EPEC).